We begin with the raw amino-acid sequence, 295 residues long: Pyridoxal 5'-phosphate synthase subunit PdxS (295 aa).

Asp-23 is a D-ribose 5-phosphate binding site. The active-site Schiff-base intermediate with D-ribose 5-phosphate is the Lys-80. Position 152 (Gly-152) interacts with D-ribose 5-phosphate. Arg-164 is a binding site for D-glyceraldehyde 3-phosphate. D-ribose 5-phosphate-binding positions include Gly-213 and 234 to 235 (GS).

The protein belongs to the PdxS/SNZ family. In the presence of PdxT, forms a dodecamer of heterodimers.

The catalysed reaction is aldehydo-D-ribose 5-phosphate + D-glyceraldehyde 3-phosphate + L-glutamine = pyridoxal 5'-phosphate + L-glutamate + phosphate + 3 H2O + H(+). The protein operates within cofactor biosynthesis; pyridoxal 5'-phosphate biosynthesis. In terms of biological role, catalyzes the formation of pyridoxal 5'-phosphate from ribose 5-phosphate (RBP), glyceraldehyde 3-phosphate (G3P) and ammonia. The ammonia is provided by the PdxT subunit. Can also use ribulose 5-phosphate and dihydroxyacetone phosphate as substrates, resulting from enzyme-catalyzed isomerization of RBP and G3P, respectively. This chain is Pyridoxal 5'-phosphate synthase subunit PdxS, found in Methanopyrus kandleri (strain AV19 / DSM 6324 / JCM 9639 / NBRC 100938).